The following is a 123-amino-acid chain: Large ribosomal subunit protein bL19 (123 aa).

This sequence belongs to the bacterial ribosomal protein bL19 family.

Its function is as follows. This protein is located at the 30S-50S ribosomal subunit interface and may play a role in the structure and function of the aminoacyl-tRNA binding site. The sequence is that of Large ribosomal subunit protein bL19 (rplS) from Treponema pallidum (strain Nichols).